Consider the following 264-residue polypeptide: Phosphonoacetaldehyde hydrolase (264 aa).

Aspartate 9 acts as the Nucleophile in catalysis. Mg(2+)-binding residues include aspartate 9 and alanine 11. The active-site Schiff-base intermediate with substrate is lysine 50. A Mg(2+)-binding site is contributed by aspartate 183.

The protein belongs to the HAD-like hydrolase superfamily. PhnX family. Homodimer. Mg(2+) is required as a cofactor.

It carries out the reaction phosphonoacetaldehyde + H2O = acetaldehyde + phosphate + H(+). Its function is as follows. Involved in phosphonate degradation. The sequence is that of Phosphonoacetaldehyde hydrolase from Bacillus anthracis.